A 556-amino-acid polypeptide reads, in one-letter code: Glutamine--tRNA ligase (556 aa).

A 'HIGH' region motif is present at residues 34–44; that stretch reads PEPNGYLHIGH. Residues 35–37 and 41–47 contribute to the ATP site; these read EPN and HIGHAKS. L-glutamine is bound by residues D67 and Y212. ATP contacts are provided by residues T231, 261–262, and 269–271; these read RL and MSK. Positions 268 to 272 match the 'KMSKS' region motif; the sequence is VMSKR.

This sequence belongs to the class-I aminoacyl-tRNA synthetase family. Monomer.

The protein resides in the cytoplasm. The enzyme catalyses tRNA(Gln) + L-glutamine + ATP = L-glutaminyl-tRNA(Gln) + AMP + diphosphate. The sequence is that of Glutamine--tRNA ligase from Vibrio cholerae serotype O1 (strain ATCC 39315 / El Tor Inaba N16961).